Here is a 255-residue protein sequence, read N- to C-terminus: Small ribosomal subunit protein eS1 (255 aa).

N-acetylalanine; partial is present on A2.

Belongs to the eukaryotic ribosomal protein eS1 family. In terms of assembly, component of the small ribosomal subunit. Mature ribosomes consist of a small (40S) and a large (60S) subunit. The 40S subunit contains about 33 different proteins and 1 molecule of RNA (18S). The 60S subunit contains about 49 different proteins and 3 molecules of RNA (25S, 5.8S and 5S).

The protein resides in the cytoplasm. In Arthroderma otae (strain ATCC MYA-4605 / CBS 113480) (Microsporum canis), this protein is Small ribosomal subunit protein eS1.